The following is a 70-amino-acid chain: uncharacterized protein (70 aa).

The C2H2-type zinc-finger motif lies at 21–43 (YECPICGEIYIKRKSMITHLRKH).

This is an uncharacterized protein from Saccharolobus islandicus (Sulfolobus islandicus).